Here is a 67-residue protein sequence, read N- to C-terminus: Metallothionein-A (67 aa).

This sequence belongs to the metallothionein superfamily. Type 4 family.

Functionally, metallothioneins have a high content of cysteine residues that bind various heavy metals. The sequence is that of Metallothionein-A from Sphaerechinus granularis (Purple sea urchin).